Here is a 600-residue protein sequence, read N- to C-terminus: Kelch-like protein 24 (600 aa).

The region spanning 66-133 (TDVIICVEGK…VYTGKVKITT (68 aa)) is the BTB domain. A BACK domain is found at 168–270 (CLGIQRFADT…HPNYFVQTVE (103 aa)). Kelch repeat units lie at residues 314–363 (VIVV…ALRN), 365–407 (ILVS…VLLG), 408–454 (KVYV…SCVG), 456–502 (LFVI…SLNN), 504–544 (IYVA…VCNG), and 546–592 (IYIL…TIHR).

Forms homodimers. Interacts with GRIK2. Component of the BCR(KLHL24) E3 ubiquitin ligase complex, composed of CUL3, RBX1 and KLHL24. Interacts with CUL3. Interacts with KRT14. In terms of processing, autoubiquitinated. Autoubiquitination leads to proteasomal degradation and is necessary to control KLHL24 levels. In terms of tissue distribution, expressed in the skin. Found in keratinocytes, dermal fibroblasts, and melanocytes. Basal-layer keratinocytes have lower KLHL24 expression than suprabasal keratinocytes. Expressed in the brain, spinal cord, liver, testis, heart and at higher levels in the skeletal muscle.

Its subcellular location is the perikaryon. The protein resides in the cell projection. It is found in the axon. The protein localises to the cytoplasm. It localises to the cell junction. Its subcellular location is the desmosome. The protein resides in the adherens junction. Necessary to maintain the balance between intermediate filament stability and degradation, a process that is essential for skin integrity. As part of the BCR(KLHL24) E3 ubiquitin ligase complex, mediates ubiquitination of KRT14 and controls its levels during keratinocytes differentiation. Specifically reduces kainate receptor-mediated currents in hippocampal neurons, most probably by modulating channel properties. Has a crucial role in cardiac development and function. This chain is Kelch-like protein 24 (KLHL24), found in Homo sapiens (Human).